A 245-amino-acid polypeptide reads, in one-letter code: ATP synthase subunit a, chloroplastic (245 aa).

Transmembrane regions (helical) follow at residues 34 to 54 (TLMT…LSNL), 93 to 113 (VPFL…GALL), 132 to 152 (INTT…AGIS), 197 to 217 (LVIA…LMLL), and 218 to 238 (GLFT…AYIG).

This sequence belongs to the ATPase A chain family. F-type ATPases have 2 components, CF(1) - the catalytic core - and CF(0) - the membrane proton channel. CF(1) has five subunits: alpha(3), beta(3), gamma(1), delta(1), epsilon(1). CF(0) has four main subunits: a, b, b' and c.

It localises to the plastid. It is found in the chloroplast thylakoid membrane. Functionally, key component of the proton channel; it plays a direct role in the translocation of protons across the membrane. The protein is ATP synthase subunit a, chloroplastic of Bigelowiella natans (Pedinomonas minutissima).